Here is a 350-residue protein sequence, read N- to C-terminus: Bifunctional methylenetetrahydrofolate dehydrogenase/cyclohydrolase, mitochondrial (350 aa).

The N-terminal 35 residues, methionine 1–asparagine 35, are a transit peptide targeting the mitochondrion. Lysine 50 carries the N6-acetyllysine; alternate modification. A Glycyl lysine isopeptide (Lys-Gly) (interchain with G-Cter in SUMO2); alternate cross-link involves residue lysine 50. Substrate contacts are provided by residues tyrosine 84–lysine 88 and valine 131–leucine 133. NAD(+) contacts are provided by residues glycine 200–serine 202 and arginine 233. Position 309–313 (proline 309–glycine 313) interacts with substrate.

Belongs to the tetrahydrofolate dehydrogenase/cyclohydrolase family. As to quaternary structure, homodimer. Mg(2+) serves as cofactor.

The protein localises to the mitochondrion. It catalyses the reaction (6R)-5,10-methylene-5,6,7,8-tetrahydrofolate + NAD(+) = (6R)-5,10-methenyltetrahydrofolate + NADH. The catalysed reaction is (6R)-5,10-methenyltetrahydrofolate + H2O = (6R)-10-formyltetrahydrofolate + H(+). Functionally, although its dehydrogenase activity is NAD-specific, it can also utilize NADP at a reduced efficiency. This chain is Bifunctional methylenetetrahydrofolate dehydrogenase/cyclohydrolase, mitochondrial (MTHFD2), found in Homo sapiens (Human).